A 235-amino-acid chain; its full sequence is Orotidine 5'-phosphate decarboxylase (235 aa).

Residues Asp11, Lys33, 60–69 (DLKFHDIPNT), Thr119, Arg180, Gln189, Gly209, and Arg210 each bind substrate. The active-site Proton donor is Lys62.

Belongs to the OMP decarboxylase family. Type 1 subfamily. Homodimer.

The enzyme catalyses orotidine 5'-phosphate + H(+) = UMP + CO2. Its pathway is pyrimidine metabolism; UMP biosynthesis via de novo pathway; UMP from orotate: step 2/2. Its function is as follows. Catalyzes the decarboxylation of orotidine 5'-monophosphate (OMP) to uridine 5'-monophosphate (UMP). The chain is Orotidine 5'-phosphate decarboxylase from Alkalilimnicola ehrlichii (strain ATCC BAA-1101 / DSM 17681 / MLHE-1).